The primary structure comprises 500 residues: Endothelial lipase (500 aa).

The first 20 residues, 1–20 (MRNTVFLLGFWSVYCYFPAG), serve as a signal peptide directing secretion. Cys-64 and Cys-77 form a disulfide bridge. Asn-65, Asn-80, and Asn-136 each carry an N-linked (GlcNAc...) asparagine glycan. Catalysis depends on Ser-169, which acts as the Nucleophile. The active-site Charge relay system is the Asp-193. Residues Cys-252 and Cys-272 are joined by a disulfide bond. Residue His-274 is the Charge relay system of the active site. Cystine bridges form between Cys-297–Cys-316 and Cys-308–Cys-311. 325–337 (KMRKKRNSKMYLK) provides a ligand contact to heparin. Residues 347-482 (YHYQLKVHMF…SPGQELWFHK (136 aa)) form the PLAT domain. N-linked (GlcNAc...) asparagine glycosylation is found at Asn-359 and Asn-393. Cysteines 463 and 483 form a disulfide. Asn-491 carries an N-linked (GlcNAc...) asparagine glycan.

Belongs to the AB hydrolase superfamily. Lipase family. In terms of assembly, head to tail homodimer. As to expression, expressed in placenta, lung, liver, testis and spleen.

Its subcellular location is the secreted. The catalysed reaction is a triacylglycerol + H2O = a diacylglycerol + a fatty acid + H(+). The enzyme catalyses a 1,2-diacyl-sn-glycero-3-phosphocholine + H2O = a 2-acyl-sn-glycero-3-phosphocholine + a fatty acid + H(+). It carries out the reaction 1,2,3-tri-(9Z-octadecenoyl)-glycerol + H2O = di-(9Z)-octadecenoylglycerol + (9Z)-octadecenoate + H(+). It catalyses the reaction 1,2,3-tributanoylglycerol + H2O = dibutanoylglycerol + butanoate + H(+). The catalysed reaction is 1,2-dihexadecanoyl-sn-glycero-3-phosphocholine + H2O = hexadecanoyl-sn-glycero-3-phosphocholine + hexadecanoate + H(+). Exerts both phospholipase and triglyceride lipase activities. More active as a phospholipase than a triglyceride lipase. Hydrolyzes triglycerides, both with short-chain fatty acyl groups (tributyrin) and long-chain fatty acyl groups (triolein) with similar levels of activity toward both types of substrates. Hydrolyzes high density lipoproteins (HDL) more efficiently than other lipoproteins. The chain is Endothelial lipase (Lipg) from Mus musculus (Mouse).